Here is a 134-residue protein sequence, read N- to C-terminus: Large ribosomal subunit protein uL16c (134 aa).

It belongs to the universal ribosomal protein uL16 family. In terms of assembly, part of the 50S ribosomal subunit.

It localises to the plastid. It is found in the chloroplast. The polypeptide is Large ribosomal subunit protein uL16c (Solanum lycopersicum (Tomato)).